The following is a 371-amino-acid chain: tRNA-specific 2-thiouridylase MnmA (371 aa).

ATP-binding positions include 14 to 21 (GMSGGVDS) and Met-40. Residues 100–102 (NPD) are interaction with target base in tRNA. The active-site Nucleophile is the Cys-105. An intrachain disulfide couples Cys-105 to Cys-201. Gly-129 is a binding site for ATP. The interval 151–153 (KDQ) is interaction with tRNA. Residue Cys-201 is the Cysteine persulfide intermediate of the active site. The tract at residues 309–310 (RY) is interaction with tRNA.

This sequence belongs to the MnmA/TRMU family.

It is found in the cytoplasm. The enzyme catalyses S-sulfanyl-L-cysteinyl-[protein] + uridine(34) in tRNA + AH2 + ATP = 2-thiouridine(34) in tRNA + L-cysteinyl-[protein] + A + AMP + diphosphate + H(+). Functionally, catalyzes the 2-thiolation of uridine at the wobble position (U34) of tRNA, leading to the formation of s(2)U34. The sequence is that of tRNA-specific 2-thiouridylase MnmA from Halalkalibacterium halodurans (strain ATCC BAA-125 / DSM 18197 / FERM 7344 / JCM 9153 / C-125) (Bacillus halodurans).